The chain runs to 109 residues: uncharacterized protein (109 aa).

A run of 3 helical transmembrane segments spans residues 16–36, 54–74, and 80–100; these read YIPLVVLLQMYIIYVEPYYGL, TVYFLVICHSIESAIAFLLCL, and FCSSMKWIVSTFIFGGPTLAM.

Its subcellular location is the membrane. This is an uncharacterized protein from Schizosaccharomyces pombe (strain 972 / ATCC 24843) (Fission yeast).